The chain runs to 255 residues: TIR domain-containing protein (255 aa).

The TIR domain occupies 9 to 185 (LSDQVFINFR…DIVKEVKKQL (177 aa)). Residue Glu83 is part of the active site. 2 consecutive transmembrane segments (helical) span residues 195–215 (AIGVAFLAITINLIFSFFIAP) and 223–243 (FFQTPEWFIGTLAVVLASWFW). Residues 201-255 (LAITINLIFSFFIAPKYLPDQKFFQTPEWFIGTLAVVLASWFWYKNNQNKAPPPS) form the KASH domain.

In terms of assembly, forms homomers. Interacts with SUN1, SUN2, SUN3, SUN4 and SUN5.

The protein resides in the nucleus membrane. The enzyme catalyses NAD(+) + H2O = ADP-D-ribose + nicotinamide + H(+). Could play a role in nuclear morphology, specifically nuclear size. This is TIR domain-containing protein from Arabidopsis thaliana (Mouse-ear cress).